The primary structure comprises 55 residues: UPF0391 membrane protein Meso_3110 (55 aa).

2 helical membrane-spanning segments follow: residues 4 to 24 and 30 to 50; these read WALV…GGIA and IAQI…LFGL.

Belongs to the UPF0391 family.

It is found in the cell membrane. This Chelativorans sp. (strain BNC1) protein is UPF0391 membrane protein Meso_3110.